A 49-amino-acid polypeptide reads, in one-letter code: Large ribosomal subunit protein bL33A (49 aa).

Belongs to the bacterial ribosomal protein bL33 family.

The sequence is that of Large ribosomal subunit protein bL33A from Latilactobacillus sakei subsp. sakei (strain 23K) (Lactobacillus sakei subsp. sakei).